We begin with the raw amino-acid sequence, 88 residues long: Small ribosomal subunit protein uS15 (88 aa).

It belongs to the universal ribosomal protein uS15 family. As to quaternary structure, part of the 30S ribosomal subunit. Forms a bridge to the 50S subunit in the 70S ribosome, contacting the 23S rRNA.

In terms of biological role, one of the primary rRNA binding proteins, it binds directly to 16S rRNA where it helps nucleate assembly of the platform of the 30S subunit by binding and bridging several RNA helices of the 16S rRNA. Forms an intersubunit bridge (bridge B4) with the 23S rRNA of the 50S subunit in the ribosome. The chain is Small ribosomal subunit protein uS15 from Thermoanaerobacter pseudethanolicus (strain ATCC 33223 / 39E) (Clostridium thermohydrosulfuricum).